A 484-amino-acid polypeptide reads, in one-letter code: Putative amidase AmiA2 (484 aa).

Residues Lys93 and Ser167 each act as charge relay system in the active site. Ser191 functions as the Acyl-ester intermediate in the catalytic mechanism.

Belongs to the amidase family.

The enzyme catalyses a monocarboxylic acid amide + H2O = a monocarboxylate + NH4(+). The polypeptide is Putative amidase AmiA2 (amiA2) (Mycobacterium bovis (strain ATCC BAA-935 / AF2122/97)).